A 713-amino-acid chain; its full sequence is Early transcription factor 82 kDa subunit (713 aa).

Belongs to the poxviridae VETF large subunit family. Heterodimer of a 70 kDa and a 82 kDa subunit. Part of the early transcription complex composed of ETF, RAP94, and the DNA-directed RNA polymerase.

Acts with RNA polymerase to initiate transcription from early gene promoters. Is recruited by the RPO-associated protein of 94 kDa (RAP94) to form the early transcription complex, which also contains the core RNA polymerase. ETF heterodimer binds to early gene promoters. The polypeptide is Early transcription factor 82 kDa subunit (VETFL) (Yaba monkey tumor virus (strain VR587) (YMTV)).